The chain runs to 700 residues: Long-chain-fatty-acid--CoA ligase 1 (700 aa).

Positions 1 to 21 (MVAQYTVPVGKAANEHETAPR) are disordered. A Glycyl lysine isopeptide (Lys-Gly) (interchain with G-Cter in ubiquitin) cross-link involves residue lysine 189. Residue 269 to 280 (YTSGSTGEPKGV) participates in ATP binding. The FACS signature appears at 531-580 (DGWFKTGDIGEWEANGHLKIIDRKKNLVKTMNGEYIALEKLESVYRSNEY).

The protein belongs to the ATP-dependent AMP-binding enzyme family. In terms of assembly, interacts with FAT1. Mg(2+) is required as a cofactor.

It localises to the lipid droplet. It is found in the cell membrane. The catalysed reaction is a long-chain fatty acid + ATP + CoA = a long-chain fatty acyl-CoA + AMP + diphosphate. The enzyme catalyses (9Z)-octadecenoate + ATP + CoA = (9Z)-octadecenoyl-CoA + AMP + diphosphate. It catalyses the reaction hexadecanoate + ATP + CoA = hexadecanoyl-CoA + AMP + diphosphate. It carries out the reaction (9Z)-hexadecenoate + ATP + CoA = (9Z)-hexadecenoyl-CoA + AMP + diphosphate. The catalysed reaction is tetradecanoate + ATP + CoA = tetradecanoyl-CoA + AMP + diphosphate. The enzyme catalyses (9Z)-tetradecenoate + ATP + CoA = (9Z)-tetradecenoyl-CoA + AMP + diphosphate. It catalyses the reaction (9Z,12Z)-octadecadienoate + ATP + CoA = (9Z,12Z)-octadecadienoyl-CoA + AMP + diphosphate. It carries out the reaction dodecanoate + ATP + CoA = dodecanoyl-CoA + AMP + diphosphate. The catalysed reaction is pentadecanoate + ATP + CoA = pentadecanoyl-CoA + AMP + diphosphate. The enzyme catalyses undecanoate + ATP + CoA = undecanoyl-CoA + AMP + diphosphate. It catalyses the reaction heptadecanoate + ATP + CoA = heptadecanoyl-CoA + AMP + diphosphate. It carries out the reaction octadecanoate + ATP + CoA = octadecanoyl-CoA + AMP + diphosphate. Its function is as follows. Activates long-chain fatty acids (LCFA) by esterification of the fatty acids into metabolically active CoA-thioesters for subsequent degradation or incorporation into phospholipids. Also facilitates the transport of LCFAs into the cell, either by active transport or by decreasing the intracellular LCFA concentration. It may supplement intracellular myristoyl-CoA pools from exogenous myristate. Preferentially acts on C12:0-C16:0 fatty acids with myristic and pentadecanic acid (C15:0) having the highest activities. Also involved in long-chain base (LCB) uptake of sphingolipids. In contrast ot LCFA uptake, LCB uptake does not require ATP, suggesting that the enzyme is directly involved in active LCB uptake. Involved in the sphingolipid-to-glycerolipid metabolic pathway, converting the sphingolipid metabolite hexadecenoic acid to hexadecenoyl-CoA, which is then further converted to glycerolipids. The polypeptide is Long-chain-fatty-acid--CoA ligase 1 (FAA1) (Saccharomyces cerevisiae (strain ATCC 204508 / S288c) (Baker's yeast)).